The primary structure comprises 160 residues: Eukaryotic translation initiation factor 5A-1/2 (160 aa).

Positions 1–12 (MSDEEHHFESKA) are enriched in basic and acidic residues. The interval 1 to 21 (MSDEEHHFESKADAGASKTYP) is disordered. The residue at position 52 (Lys-52) is a Hypusine.

It belongs to the eIF-5A family. Post-translationally, lys-52 undergoes hypusination, a unique post-translational modification that consists in the addition of a butylamino group from spermidine to lysine side chain, leading to the formation of the unusual amino acid hypusine. eIF-5As are the only known proteins to undergo this modification, which is essential for their function.

Functionally, translation factor that promotes translation elongation and termination, particularly upon ribosome stalling at specific amino acid sequence contexts. Binds between the exit (E) and peptidyl (P) site of the ribosome and promotes rescue of stalled ribosome: specifically required for efficient translation of polyproline-containing peptides as well as other motifs that stall the ribosome. Acts as a ribosome quality control (RQC) cofactor by joining the RQC complex to facilitate peptidyl transfer during CAT tailing step. In Solanum tuberosum (Potato), this protein is Eukaryotic translation initiation factor 5A-1/2 (EIF5A1).